Consider the following 981-residue polypeptide: Ephrin type-A receptor 3 (981 aa).

A signal peptide spans 1 to 20 (MALFRIYSFLAPFHILVLCQ). Residues 21 to 545 (ALRNYPDNEV…LAVGDPNQQT (525 aa)) are Extracellular-facing. The 182-residue stretch at 29–210 (EVTLLDSMSA…FYKRCPLAVL (182 aa)) folds into the Eph LBD domain. Fibronectin type-III domains follow at residues 328–441 (PPSA…TSQT) and 442–533 (VSVI…TSHE). Asn340, Asn410, Asn435, and Asn485 each carry an N-linked (GlcNAc...) asparagine glycan. The chain crosses the membrane as a helical span at residues 546–566 (ILAISVAGGAVLLVLLVACFI). The Cytoplasmic segment spans residues 567–981 (VSGRRCGYIK…QAHHGTQVQV (415 aa)). 2 positions are modified to phosphotyrosine; by autocatalysis: Tyr601 and Tyr607. A Protein kinase domain is found at 626–887 (IRIERVIGAG…QIVNTLDRLI (262 aa)). Residues 633-638 (GAGEFG), Lys658, and 705-711 (EYMENGS) contribute to the ATP site. Tyr706 is modified (phosphotyrosine; by autocatalysis). Catalysis depends on Asp751, which acts as the Proton acceptor. 755–756 (RN) lines the ATP pocket. 2 positions are modified to phosphotyrosine; by autocatalysis: Tyr784 and Tyr927. Residues 910-974 (AAVNTVEDWL…LSSIQCLQAH (65 aa)) form the SAM domain. The PDZ-binding signature appears at 979–981 (VQV).

The protein belongs to the protein kinase superfamily. Tyr protein kinase family. Ephrin receptor subfamily. In terms of assembly, heterotetramer upon binding of the ligand. The heterotetramer is composed of an ephrin dimer and a receptor dimer. Oligomerization is probably required to induce biological responses. Post-translationally, autophosphorylates upon activation by efna5. Widely expressed in the developing zebrafish nervous system.

Its subcellular location is the cell membrane. The enzyme catalyses L-tyrosyl-[protein] + ATP = O-phospho-L-tyrosyl-[protein] + ADP + H(+). Functionally, receptor tyrosine kinase which binds promiscuously membrane-bound ephrin family ligands residing on adjacent cells, leading to contact-dependent bidirectional signaling into neighboring cells. The signaling pathway downstream of the receptor is referred to as forward signaling while the signaling pathway downstream of the ephrin ligand is referred to as reverse signaling. Highly promiscuous for ephrin-A ligands it binds preferentially efna5. Upon activation by efna5 regulates cell-cell adhesion, cytoskeletal organization and cell migration. Plays a role in cardiac cells migration and differentiation probably through activation by efna1. Involved in the retinotectal mapping of neurons. May also control the segregation but not the guidance of motor and sensory axons during neuromuscular circuit development. The polypeptide is Ephrin type-A receptor 3 (epha3) (Danio rerio (Zebrafish)).